Reading from the N-terminus, the 637-residue chain is Protein RRP6-like 1 (637 aa).

In terms of domain architecture, 3'-5' exonuclease spans 118–283; it reads VEEVKDLEDL…YIYDVMRMEL (166 aa). The 81-residue stretch at 334–414 folds into the HRDC domain; it reads NAVQLSIVAG…RRSMQNAAAF (81 aa). A compositionally biased stretch (acidic residues) spans 553-565; the sequence is VDDDDDDDDDESY. The interval 553–624 is disordered; the sequence is VDDDDDDDDD…EDMRRRSEKH (72 aa). Residues 580–598 show a composition bias toward polar residues; that stretch reads ETPSKGSPSLTQKPKTCNT. Residues 602-614 show a composition bias toward acidic residues; it reads VLDDDDDSESRED.

It is found in the nucleus. It localises to the nucleoplasm. In terms of biological role, acts as an important epigenetic regulator through multiple silencing mechanisms. Involved in transcriptional gene silencing (TGS). Plays a role for DNA methylation in the RNA-directed DNA methylation (RdDM) pathway. Contributes to the methylation status of the retrotransposon SN1. Required for DNA methylation only at a subset of RdDM target loci. Plays a regulatory role in RdDM through retention of non-coding RNAs (ncRNAs) in normal cells. Helps to retain Pol V-transcribed RNAs in chromatin to enable their scaffold function and is required for genome-wide Pol IV-dependent siRNA (24 nt siRNA) production that may involve retention of Pol IV transcripts. Involved in association with RRP6L2 in the silencing of the solo LTR locus. Controls levels of ncRNAs from the solo LTR locus. Seems to function independently of the RdDM pathway. Functions redundantly with RRP6L2 in the regulation of FLC locus. Participates in the maintenance of trimethylated 'Lys-27' (H3K27me3) at FLC locus via the regulation of antisense long non-coding RNAs (lncRNAs) and the regulation of diverse antisense RNAs derived from the FLC locus. Seems not involved in the exosomal RNA degradation. Can complement the growth defect of a yeast mutant lacking RRP6 exonuclease. This Arabidopsis thaliana (Mouse-ear cress) protein is Protein RRP6-like 1.